Here is a 98-residue protein sequence, read N- to C-terminus: Co-chaperonin GroES (98 aa).

This sequence belongs to the GroES chaperonin family. In terms of assembly, heptamer of 7 subunits arranged in a ring. Interacts with the chaperonin GroEL.

The protein resides in the cytoplasm. Its function is as follows. Together with the chaperonin GroEL, plays an essential role in assisting protein folding. The GroEL-GroES system forms a nano-cage that allows encapsulation of the non-native substrate proteins and provides a physical environment optimized to promote and accelerate protein folding. GroES binds to the apical surface of the GroEL ring, thereby capping the opening of the GroEL channel. This Agrobacterium fabrum (strain C58 / ATCC 33970) (Agrobacterium tumefaciens (strain C58)) protein is Co-chaperonin GroES.